The sequence spans 284 residues: Lipoyl synthase (284 aa).

Residues cysteine 34, cysteine 39, cysteine 45, cysteine 60, cysteine 64, cysteine 67, and serine 272 each coordinate [4Fe-4S] cluster. The 216-residue stretch at 46 to 261 folds into the Radical SAM core domain; that stretch reads FARRTATFMI…EEIGYKLGFK (216 aa).

It belongs to the radical SAM superfamily. Lipoyl synthase family. The cofactor is [4Fe-4S] cluster.

It is found in the cytoplasm. The catalysed reaction is [[Fe-S] cluster scaffold protein carrying a second [4Fe-4S](2+) cluster] + N(6)-octanoyl-L-lysyl-[protein] + 2 oxidized [2Fe-2S]-[ferredoxin] + 2 S-adenosyl-L-methionine + 4 H(+) = [[Fe-S] cluster scaffold protein] + N(6)-[(R)-dihydrolipoyl]-L-lysyl-[protein] + 4 Fe(3+) + 2 hydrogen sulfide + 2 5'-deoxyadenosine + 2 L-methionine + 2 reduced [2Fe-2S]-[ferredoxin]. The protein operates within protein modification; protein lipoylation via endogenous pathway; protein N(6)-(lipoyl)lysine from octanoyl-[acyl-carrier-protein]: step 2/2. In terms of biological role, catalyzes the radical-mediated insertion of two sulfur atoms into the C-6 and C-8 positions of the octanoyl moiety bound to the lipoyl domains of lipoate-dependent enzymes, thereby converting the octanoylated domains into lipoylated derivatives. In Caldanaerobacter subterraneus subsp. tengcongensis (strain DSM 15242 / JCM 11007 / NBRC 100824 / MB4) (Thermoanaerobacter tengcongensis), this protein is Lipoyl synthase.